The sequence spans 65 residues: Large ribosomal subunit protein bL31 (65 aa).

The Zn(2+) site is built by cysteine 16, cysteine 18, cysteine 36, and cysteine 39.

Belongs to the bacterial ribosomal protein bL31 family. Type A subfamily. Part of the 50S ribosomal subunit. It depends on Zn(2+) as a cofactor.

Binds the 23S rRNA. The protein is Large ribosomal subunit protein bL31 of Geobacter sulfurreducens (strain ATCC 51573 / DSM 12127 / PCA).